The following is a 544-amino-acid chain: MAVALFPILPIGCLLIYIIFKLWTRDERLKHLPPGPKGLPVIGNMLDMADTDKMMKKSKDWADEYGEIFYTKVGLYNFVWLSSPNAVRELMDKKGSIYSSRPPSPMINMVSNGERLNFLPYGHKWRTIRNILHSALNLETSSTYKPVQDFESKQALWEILHAKDDMEFNDINRRYSTSTIMTITYGLRVPTLQHPLYQDILTIVRHFSLATAPGEWVIDMVPMLADIVPQFLLQNWKNVARKWYKEDSEIYLALYNKLMDDIKRGTAPDCFLKDMAREKLKKNPIADTTAAFAAGALIEAGSDATTTALNNVVLACLLYPEIVKGAHEELDRVVGSDRMPEFSDEPNLPYIRGIAKETLRWRASTKVGPAHATTQDDWYNGYFIPKGTGVVLNWWAIHMNEKRWKDPERFDPTRYLEDTLTEAESMAQPNPELRDHFTFGAGRRNCPGVHIAHNSLFINIARIFWAFNKQKSKDADGKILEPSTAAQPGFLLTPVKFPCHFEARSDKHARIIEERWTEAQEKGIDGWKGKKESSSEENRGVSSR.

Residues 3–23 form a helical membrane-spanning segment; it reads VALFPILPIGCLLIYIIFKLW. Cys446 contributes to the heme binding site. A disordered region spans residues 520–544; that stretch reads QEKGIDGWKGKKESSSEENRGVSSR.

The protein belongs to the cytochrome P450 family. Requires heme as cofactor.

It is found in the membrane. Its pathway is mycotoxin biosynthesis. Cytochrome P450 monooxygenase; part of the gene cluster that mediates the biosynthesis of 11'-deoxyverticillin A, one of the dimeric epipolythiodioxopiperazines (ETPs) from the verticillin family that act as mycotoxins. 11'-deoxyverticillin A is required for normal conidiation. The nonribosomal peptide synthetase verP is speculated to be responsible for condensation of amino acids to form the carbon skeleton of verticillin, whereas the cluster-specific tailoring enzymes are involved in further modifications leading to the production of 11'-deoxyverticillin A. In Clonostachys rogersoniana, this protein is Cytochrome P450 monooxygenase verL.